The sequence spans 260 residues: Large ribosomal subunit protein eL8A (260 aa).

The disordered stretch occupies residues 1 to 34 (MPSSKKVAPAPLATKSKASTSTKNPLFESTPKNF).

The protein belongs to the eukaryotic ribosomal protein eL8 family. In terms of assembly, component of the large ribosomal subunit. Mature ribosomes consist of a small (40S) and a large (60S) subunit. The 40S subunit contains about 32 different proteins and 1 molecule of RNA (18S). The 60S subunit contains 45 different proteins and 3 molecules of RNA (25S, 5.8S and 5S).

It is found in the cytoplasm. Its function is as follows. Component of the ribosome, a large ribonucleoprotein complex responsible for the synthesis of proteins in the cell. The small ribosomal subunit (SSU) binds messenger RNAs (mRNAs) and translates the encoded message by selecting cognate aminoacyl-transfer RNA (tRNA) molecules. The large subunit (LSU) contains the ribosomal catalytic site termed the peptidyl transferase center (PTC), which catalyzes the formation of peptide bonds, thereby polymerizing the amino acids delivered by tRNAs into a polypeptide chain. The nascent polypeptides leave the ribosome through a tunnel in the LSU and interact with protein factors that function in enzymatic processing, targeting, and the membrane insertion of nascent chains at the exit of the ribosomal tunnel. This is Large ribosomal subunit protein eL8A from Candida albicans (strain SC5314 / ATCC MYA-2876) (Yeast).